A 163-amino-acid chain; its full sequence is Crossover junction endodeoxyribonuclease RuvC (163 aa).

Catalysis depends on residues aspartate 8, glutamate 68, and aspartate 140. Residues aspartate 8, glutamate 68, and aspartate 140 each coordinate Mg(2+).

Belongs to the RuvC family. Homodimer which binds Holliday junction (HJ) DNA. The HJ becomes 2-fold symmetrical on binding to RuvC with unstacked arms; it has a different conformation from HJ DNA in complex with RuvA. In the full resolvosome a probable DNA-RuvA(4)-RuvB(12)-RuvC(2) complex forms which resolves the HJ. The cofactor is Mg(2+).

Its subcellular location is the cytoplasm. The enzyme catalyses Endonucleolytic cleavage at a junction such as a reciprocal single-stranded crossover between two homologous DNA duplexes (Holliday junction).. In terms of biological role, the RuvA-RuvB-RuvC complex processes Holliday junction (HJ) DNA during genetic recombination and DNA repair. Endonuclease that resolves HJ intermediates. Cleaves cruciform DNA by making single-stranded nicks across the HJ at symmetrical positions within the homologous arms, yielding a 5'-phosphate and a 3'-hydroxyl group; requires a central core of homology in the junction. The consensus cleavage sequence is 5'-(A/T)TT(C/G)-3'. Cleavage occurs on the 3'-side of the TT dinucleotide at the point of strand exchange. HJ branch migration catalyzed by RuvA-RuvB allows RuvC to scan DNA until it finds its consensus sequence, where it cleaves and resolves the cruciform DNA. The chain is Crossover junction endodeoxyribonuclease RuvC from Erythrobacter litoralis (strain HTCC2594).